Here is a 45-residue protein sequence, read N- to C-terminus: Phospholipase A2 3 (45 aa).

Tyr-20, Gly-24, and Gly-25 together coordinate Ca(2+). Cys-21 and Cys-36 are joined by a disulfide. His-39 is an active-site residue. Asp-40 contacts Ca(2+).

Requires Ca(2+) as cofactor. In terms of tissue distribution, expressed by the venom gland.

It is found in the secreted. It carries out the reaction a 1,2-diacyl-sn-glycero-3-phosphocholine + H2O = a 1-acyl-sn-glycero-3-phosphocholine + a fatty acid + H(+). In terms of biological role, PLA2 catalyzes the calcium-dependent hydrolysis of the 2-acyl groups in 3-sn-phosphoglycerides. The chain is Phospholipase A2 3 from Bothrops diporus (Chaco lancehead).